The chain runs to 252 residues: tRNA pseudouridine synthase A (252 aa).

Asp52 (nucleophile) is an active-site residue. Residue Tyr112 participates in substrate binding.

It belongs to the tRNA pseudouridine synthase TruA family. As to quaternary structure, homodimer.

The enzyme catalyses uridine(38/39/40) in tRNA = pseudouridine(38/39/40) in tRNA. Functionally, formation of pseudouridine at positions 38, 39 and 40 in the anticodon stem and loop of transfer RNAs. The sequence is that of tRNA pseudouridine synthase A from Porphyromonas gingivalis (strain ATCC 33277 / DSM 20709 / CIP 103683 / JCM 12257 / NCTC 11834 / 2561).